Here is a 309-residue protein sequence, read N- to C-terminus: UPF0252 protein PH0672 (309 aa).

A run of 2 helical transmembrane segments spans residues 5 to 25 and 106 to 126; these read SVII…NESI and AVLT…LMIF.

The protein belongs to the UPF0252 family.

The protein localises to the cell membrane. The chain is UPF0252 protein PH0672 from Pyrococcus horikoshii (strain ATCC 700860 / DSM 12428 / JCM 9974 / NBRC 100139 / OT-3).